Reading from the N-terminus, the 491-residue chain is N-succinylglutamate 5-semialdehyde dehydrogenase (491 aa).

Position 225–230 (225–230 (GSSTVG)) interacts with NAD(+). Active-site residues include Glu248 and Cys282.

Belongs to the aldehyde dehydrogenase family. AstD subfamily.

It carries out the reaction N-succinyl-L-glutamate 5-semialdehyde + NAD(+) + H2O = N-succinyl-L-glutamate + NADH + 2 H(+). It participates in amino-acid degradation; L-arginine degradation via AST pathway; L-glutamate and succinate from L-arginine: step 4/5. Its function is as follows. Catalyzes the NAD-dependent reduction of succinylglutamate semialdehyde into succinylglutamate. This Marinobacter nauticus (strain ATCC 700491 / DSM 11845 / VT8) (Marinobacter aquaeolei) protein is N-succinylglutamate 5-semialdehyde dehydrogenase.